Reading from the N-terminus, the 160-residue chain is Oocyte-secreted protein 4B (160 aa).

An N-terminal signal peptide occupies residues 1–13 (MKTSVLLAITAMC).

This sequence belongs to the PLAC1 family.

It is found in the secreted. The chain is Oocyte-secreted protein 4B from Homo sapiens (Human).